Consider the following 354-residue polypeptide: Uroporphyrinogen decarboxylase (354 aa).

Residues 27 to 31 (RQAGR), D77, Y154, T209, and H327 each bind substrate.

It belongs to the uroporphyrinogen decarboxylase family. As to quaternary structure, homodimer.

The protein resides in the cytoplasm. The enzyme catalyses uroporphyrinogen III + 4 H(+) = coproporphyrinogen III + 4 CO2. It participates in porphyrin-containing compound metabolism; protoporphyrin-IX biosynthesis; coproporphyrinogen-III from 5-aminolevulinate: step 4/4. Functionally, catalyzes the decarboxylation of four acetate groups of uroporphyrinogen-III to yield coproporphyrinogen-III. The polypeptide is Uroporphyrinogen decarboxylase (Escherichia coli O17:K52:H18 (strain UMN026 / ExPEC)).